Reading from the N-terminus, the 208-residue chain is Transmembrane protein 160 (208 aa).

A mitochondrion-targeting transit peptide spans 1–45 (MASIRWLMGSRLSRFVCPFAQLVRQPVLRYVRPPVRALHRGSVRR). Transmembrane regions (helical) follow at residues 82–102 (GFLSWFRNGLLATGIGVIAFV), 110–130 (AGYAFFILGGMCVSFGGASYV), and 147–167 (VLLHTAVVSSAALFWLCAVSL). Residues 181–192 (DDEEHGADESSE) show a composition bias toward acidic residues. Positions 181-208 (DDEEHGADESSECAECRARRDREKGQDK) are disordered. Basic and acidic residues predominate over residues 194–208 (AECRARRDREKGQDK).

Belongs to the TMEM160 family.

Its subcellular location is the mitochondrion inner membrane. The polypeptide is Transmembrane protein 160 (Danio rerio (Zebrafish)).